The chain runs to 147 residues: uncharacterized protein (147 aa).

The region spanning 11–147 (NTSPGFLLWQ…SGLQELLKHE (137 aa)) is the HTH marR-type domain. The segment at residues 61-84 (QKKLASFSQTNIMMVSEVVRTLEK) is a DNA-binding region (H-T-H motif).

This is an uncharacterized protein from Bacillus subtilis (strain 168).